We begin with the raw amino-acid sequence, 125 residues long: Large ribosomal subunit protein bL12 (125 aa).

It belongs to the bacterial ribosomal protein bL12 family. In terms of assembly, homodimer. Part of the ribosomal stalk of the 50S ribosomal subunit. Forms a multimeric L10(L12)X complex, where L10 forms an elongated spine to which 2 to 4 L12 dimers bind in a sequential fashion. Binds GTP-bound translation factors.

In terms of biological role, forms part of the ribosomal stalk which helps the ribosome interact with GTP-bound translation factors. Is thus essential for accurate translation. This chain is Large ribosomal subunit protein bL12, found in Methylibium petroleiphilum (strain ATCC BAA-1232 / LMG 22953 / PM1).